The following is a 453-amino-acid chain: Bifunctional protein GlmU (453 aa).

Residues 1 to 226 are pyrophosphorylase; sequence MKFSAVILAA…PIEVEGVNDR (226 aa). UDP-N-acetyl-alpha-D-glucosamine contacts are provided by residues 8-11, lysine 22, glutamine 73, 78-79, 100-102, glycine 137, glutamate 151, asparagine 166, and asparagine 224; these read LAAG, GT, and YGD. Aspartate 102 provides a ligand contact to Mg(2+). Asparagine 224 is a binding site for Mg(2+). Residues 227–247 form a linker region; that stretch reads AQLARLERAFQAAQAKKLLEQ. Residues 248 to 453 form an N-acetyltransferase region; sequence GVMLRDPARF…TGWQRPVKKK (206 aa). Arginine 330 and lysine 348 together coordinate UDP-N-acetyl-alpha-D-glucosamine. Catalysis depends on histidine 360, which acts as the Proton acceptor. The UDP-N-acetyl-alpha-D-glucosamine site is built by tyrosine 363 and asparagine 374. Acetyl-CoA contacts are provided by residues alanine 377, 383 to 384, serine 402, alanine 420, and arginine 437; that span reads NY.

The protein in the N-terminal section; belongs to the N-acetylglucosamine-1-phosphate uridyltransferase family. This sequence in the C-terminal section; belongs to the transferase hexapeptide repeat family. In terms of assembly, homotrimer. Mg(2+) serves as cofactor.

The protein resides in the cytoplasm. The catalysed reaction is alpha-D-glucosamine 1-phosphate + acetyl-CoA = N-acetyl-alpha-D-glucosamine 1-phosphate + CoA + H(+). It carries out the reaction N-acetyl-alpha-D-glucosamine 1-phosphate + UTP + H(+) = UDP-N-acetyl-alpha-D-glucosamine + diphosphate. It participates in nucleotide-sugar biosynthesis; UDP-N-acetyl-alpha-D-glucosamine biosynthesis; N-acetyl-alpha-D-glucosamine 1-phosphate from alpha-D-glucosamine 6-phosphate (route II): step 2/2. It functions in the pathway nucleotide-sugar biosynthesis; UDP-N-acetyl-alpha-D-glucosamine biosynthesis; UDP-N-acetyl-alpha-D-glucosamine from N-acetyl-alpha-D-glucosamine 1-phosphate: step 1/1. Its pathway is bacterial outer membrane biogenesis; LPS lipid A biosynthesis. In terms of biological role, catalyzes the last two sequential reactions in the de novo biosynthetic pathway for UDP-N-acetylglucosamine (UDP-GlcNAc). The C-terminal domain catalyzes the transfer of acetyl group from acetyl coenzyme A to glucosamine-1-phosphate (GlcN-1-P) to produce N-acetylglucosamine-1-phosphate (GlcNAc-1-P), which is converted into UDP-GlcNAc by the transfer of uridine 5-monophosphate (from uridine 5-triphosphate), a reaction catalyzed by the N-terminal domain. The sequence is that of Bifunctional protein GlmU from Vibrio vulnificus (strain YJ016).